A 226-amino-acid chain; its full sequence is Translation initiation factor IF-3 (226 aa).

The tract at residues 195-226 (FVPLAPLSPEDLIEEPELESESDSDAEPESDN) is disordered. Positions 205 to 226 (DLIEEPELESESDSDAEPESDN) are enriched in acidic residues.

This sequence belongs to the IF-3 family. As to quaternary structure, monomer.

Its subcellular location is the cytoplasm. Functionally, IF-3 binds to the 30S ribosomal subunit and shifts the equilibrium between 70S ribosomes and their 50S and 30S subunits in favor of the free subunits, thus enhancing the availability of 30S subunits on which protein synthesis initiation begins. The protein is Translation initiation factor IF-3 of Chlorobium chlorochromatii (strain CaD3).